The sequence spans 150 residues: Snaclec rhinocetin subunit beta (150 aa).

The signal sequence occupies residues 1-23; the sequence is MGRFIFLSSGLLVVFLSLSGTGA. 3 cysteine pairs are disulfide-bonded: Cys27–Cys38, Cys55–Cys144, and Cys121–Cys136. In terms of domain architecture, C-type lectin spans 34 to 145; sequence YEGYCYKVFK…CNRQQYFVCK (112 aa).

Belongs to the snaclec family. Heterodimer; disulfide-linked. In terms of tissue distribution, expressed by the venom gland.

It localises to the secreted. Its function is as follows. Antagonist of the alpha-2 subunit of the integrin alpha-2/beta-1 (ITGA2/ITGB1) on human platelets and endothelial cells. This protein inhibits collagen-stimulated activation of human platelets in a dose-dependent manner. In addition, it antagonizes the binding of monoclonal antibodies against the alpha-2 subunit of integrin alpha-2/beta-1 to platelets and it coimmunoprecipitates with this integrin. The sequence is that of Snaclec rhinocetin subunit beta from Bitis rhinoceros (West African gaboon viper).